Reading from the N-terminus, the 166-residue chain is 6,7-dimethyl-8-ribityllumazine synthase (166 aa).

5-amino-6-(D-ribitylamino)uracil contacts are provided by residues Phe24, 58 to 60 (ALE), and 82 to 84 (AVV). A (2S)-2-hydroxy-3-oxobutyl phosphate-binding site is contributed by 87–88 (ET). His90 acts as the Proton donor in catalysis. 5-amino-6-(D-ribitylamino)uracil is bound at residue Asn115. (2S)-2-hydroxy-3-oxobutyl phosphate is bound at residue Arg129.

The protein belongs to the DMRL synthase family.

It catalyses the reaction (2S)-2-hydroxy-3-oxobutyl phosphate + 5-amino-6-(D-ribitylamino)uracil = 6,7-dimethyl-8-(1-D-ribityl)lumazine + phosphate + 2 H2O + H(+). Its pathway is cofactor biosynthesis; riboflavin biosynthesis; riboflavin from 2-hydroxy-3-oxobutyl phosphate and 5-amino-6-(D-ribitylamino)uracil: step 1/2. Its function is as follows. Catalyzes the formation of 6,7-dimethyl-8-ribityllumazine by condensation of 5-amino-6-(D-ribitylamino)uracil with 3,4-dihydroxy-2-butanone 4-phosphate. This is the penultimate step in the biosynthesis of riboflavin. The sequence is that of 6,7-dimethyl-8-ribityllumazine synthase from Cupriavidus necator (strain ATCC 17699 / DSM 428 / KCTC 22496 / NCIMB 10442 / H16 / Stanier 337) (Ralstonia eutropha).